Reading from the N-terminus, the 265-residue chain is S-acyl fatty acid synthase thioesterase, medium chain (265 aa).

M1 is subject to N-acetylmethionine. Catalysis depends on residues S101 and H237.

This sequence belongs to the thioesterase family. Interacts (via C-terminus) with FASN. As to expression, detected both in lactating and non-lactating breast epithelium (at protein level). Isoform 2 is up-regulated in bone marrow-derived mononuclear cells of rheumatoid arthritis patients.

The protein resides in the cytoplasm. It localises to the cytosol. It catalyses the reaction (9Z)-octadecenoyl-[ACP] + H2O = (9Z)-octadecenoate + holo-[ACP] + H(+). It carries out the reaction decanoyl-CoA + H2O = decanoate + CoA + H(+). The catalysed reaction is dodecanoyl-CoA + H2O = dodecanoate + CoA + H(+). The enzyme catalyses tetradecanoyl-CoA + H2O = tetradecanoate + CoA + H(+). It catalyses the reaction hexadecanoyl-CoA + H2O = hexadecanoate + CoA + H(+). Functionally, contributes to the release of free fatty acids from fatty acid synthase (FASN). Has broad substrate specificity, giving rise to a range of free fatty acids with chain lengths between 10 and 16 carbon atoms (C10 - C16). The chain is S-acyl fatty acid synthase thioesterase, medium chain from Homo sapiens (Human).